Here is a 251-residue protein sequence, read N- to C-terminus: UPF0246 protein DSY0297 (251 aa).

It belongs to the UPF0246 family.

The sequence is that of UPF0246 protein DSY0297 from Desulfitobacterium hafniense (strain Y51).